Here is a 188-residue protein sequence, read N- to C-terminus: Elongation factor P (188 aa).

It belongs to the elongation factor P family.

The protein localises to the cytoplasm. Its pathway is protein biosynthesis; polypeptide chain elongation. Involved in peptide bond synthesis. Stimulates efficient translation and peptide-bond synthesis on native or reconstituted 70S ribosomes in vitro. Probably functions indirectly by altering the affinity of the ribosome for aminoacyl-tRNA, thus increasing their reactivity as acceptors for peptidyl transferase. The polypeptide is Elongation factor P (Gemmatimonas aurantiaca (strain DSM 14586 / JCM 11422 / NBRC 100505 / T-27)).